The sequence spans 374 residues: Spore germination protein B3 (374 aa).

Positions 1 to 19 are cleaved as a signal peptide; it reads MKTASKFSVMFFMLLALCG. A lipid anchor (N-palmitoyl cysteine) is attached at C20. C20 carries the S-diacylglycerol cysteine lipid modification.

Belongs to the GerABKC lipoprotein family.

It localises to the cell membrane. Its function is as follows. Involved in the response to the germinative mixture of L-asparagine, glucose, fructose and potassium ions (AGFK). Cannot stimulate germination in the absence of gerD and gerK gene products (fructose and glucose receptors respectively). The protein is Spore germination protein B3 (gerBC) of Bacillus subtilis (strain 168).